The chain runs to 63 residues: High-potential iron-sulfur protein (63 aa).

Cysteine 23, cysteine 26, cysteine 41, and cysteine 56 together coordinate [4Fe-4S] cluster.

Belongs to the high-potential iron-sulfur protein (HiPIP) family. Homodimer.

Specific class of high-redox-potential 4Fe-4S ferredoxins. Functions in anaerobic electron transport in most purple and in some other photosynthetic bacteria and in at least one genus (Paracoccus) of halophilic, denitrifying bacteria. This is High-potential iron-sulfur protein (hip) from Rhodocyclus tenuis (Rhodospirillum tenue).